We begin with the raw amino-acid sequence, 1642 residues long: Coiled-coil domain-containing protein 7A (1642 aa).

Residues Pro21–Leu51 form a disordered region. One copy of the LRR 1 repeat lies at Val161–Ala184. Residues Leu279–Glu330 adopt a coiled-coil conformation. Residues Ile1310 to Thr1333 form an LRR 2 repeat.

In terms of tissue distribution, exclusively expressed in the testes.

This Mus musculus (Mouse) protein is Coiled-coil domain-containing protein 7A.